Here is a 460-residue protein sequence, read N- to C-terminus: MSTTEFPTTTKRLMGWGRTAPTVASVLSTSDPEVIVRAVTRAAEEGGRGVIARGLGRSYGDNAQNGGGLVIDMPALNRIHSIDSGTRLVDVDAGVSLDQLMKAALPHGLWVPVLPGTRQVTVGGAIGCDIHGKNHHSAGSFGNHVRSMELLTANGEVRHLTPAGPDSDLFWATVGGNGLTGIILRATIEMTPTETAYFIADGDVTGSLDETIAFHSDGSEANYTYSSAWFDAISKPPKLGRAAISRGSLAKLDQLPSKLQKDPLKFDAPQLLTLPDIFPNGLANKFTFMPIGELWYRKSGTYRNKVQNLTQFYHPLDMFGEWNRAYGSAGFLQYQFVVPTEAVEEFKSIIVDIQRSGHYSFLNVFKLFGPGNQAPLSFPIPGWNVCVDFPIKAGLHEFVTELDRRVLEFGGRLYTAKDSRTTAETFHAMYPRIDEWIRIRRSVDPDGVFASDMARRLQLL.

Residues 19 to 193 (TAPTVASVLS…LRATIEMTPT (175 aa)) enclose the FAD-binding PCMH-type domain. FAD contacts are provided by residues 52-62 (ARGLGRSYGDN), G116, 121-124 (TVGG), 128-131 (CDIH), I183, and Y414.

The protein belongs to the DprE1 family. As to quaternary structure, monomer. Interacts with DprE2 to form an epimerase complex.

It localises to the periplasm. The enzyme catalyses trans,octa-cis-decaprenylphospho-beta-D-ribofuranose + FAD + H(+) = trans,octa-cis-decaprenylphospho-beta-D-erythro-pentofuranosid-2-ulose + FADH2. It participates in cell wall biogenesis; cell wall polysaccharide biosynthesis. With respect to regulation, is inhibited by 8-nitro-benzothiazinones (BTZs) such as BTZ043; BTZs are a new class of antimycobacterial agents that block formation of both cell-wall lipoarabinomannan and arabinogalactan via inhibition of decaprenyl-phospho-arabinose (DPA) synthesis. BTZs are suicide inhibitors that act via covalent modification of DprE1; the essential nitro group of these compounds is reduced by DprE1 to a nitroso group, which then specifically reacts with Cys-386 of DprE1 to form an irreversible semimercaptal adduct. Other compounds with diverse scaffolds (dinitrobenzamides and nitrobenzoquinoxalines) also act as covalent DprE1 inhibitors. Functionally, component of the DprE1-DprE2 complex that catalyzes the 2-step epimerization of decaprenyl-phospho-ribose (DPR) to decaprenyl-phospho-arabinose (DPA), a key precursor that serves as the arabinose donor required for the synthesis of cell-wall arabinans. DprE1 catalyzes the first step of epimerization, namely FAD-dependent oxidation of the C2' hydroxyl of DPR to yield the keto intermediate decaprenyl-phospho-2'-keto-D-arabinose (DPX). The intermediate DPX is then transferred to DprE2 subunit of the epimerase complex, most probably through a 'substrate channel' at the interface of DprE1-DprE2 complex. Can also use farnesyl-phosphoryl-beta-D-ribofuranose (FPR) as substrate in vitro. Appears to be essential for the growth of M.smegmatis. In Mycolicibacterium smegmatis (strain ATCC 700084 / mc(2)155) (Mycobacterium smegmatis), this protein is Decaprenylphosphoryl-beta-D-ribose oxidase.